Consider the following 274-residue polypeptide: Nuclease (274 aa).

A signal peptide spans 1–24 (MGICGKLGVAALVALIVGCSPVQS). Residue H124 is the Proton acceptor of the active site. Mn(2+) is bound by residues N155, D246, E249, D255, F256, Q265, and E269.

It belongs to the DNA/RNA non-specific endonuclease family. As to quaternary structure, monomer. Requires Mn(2+) as cofactor. It depends on Mg(2+) as a cofactor. Ca(2+) is required as a cofactor. The cofactor is Co(2+). Post-translationally, the N-terminus is blocked.

The protein resides in the periplasm. Its function is as follows. Catalyzes the degradation of both RNA and DNA; has the potential to act as an endonuclease. This Nostoc sp. (strain PCC 7120 / SAG 25.82 / UTEX 2576) protein is Nuclease (nucA).